We begin with the raw amino-acid sequence, 1105 residues long: MSKQSQHVLIALPHPLLHLVSLGLVSFIFTLFSLELSQFGTQLAPLWFPTSIMMVAFYRHAGRMWPGIALSCSLGNIAASILLFSTSSLNMTWTTINIVEAVVGAVLLRKLLPWYNPLQNLADWLRLALGSAIVPPLLGGVLVVLLTPGDDPLRAFLIWVLSESIGALALVPLGLLFKPHYLLRHRNPRLLFESLLTLAITLTLSWLSMLYLPWPFTFIIVLLMWSAVRLPRMEAFLIFLTTVMMVSLMMAADPSLLATPRTYLMSHMPWLPFLLILLPANIMTMVMYAFRAERKHISESETHFRNAMEYSAIGMALVGTEGQWLQTNKALCQFLGYSQEELRGLTFQQLTWPEDLNKDLQQVEKLISGEINTYSMEKRYYNRNGDVVWALLAVSLVRHTDGTPLYFIAQIEDINELKRTEQVNQQLMERITLANEAGGIGIWEWELKPNIFSWDKRMFELYEIPPHIKPNWQVWYECVLPEDRQHAEKVIRDSLQSRSPFKLEFRITVKDGIRHIRALANRVLNKEGEVERLLGINMDMTEVKQLNEALFQEKERLHITLDSIGEAVVCIDMAMKITFMNPVAEKMSGWTQEEALGVPLLTVLHITFGDNGPLMENIYSADTSRSAIEQDVVLHCRSGGSYDVHYSITPLSTLDGSNIGSVLVIQDVTESRKMLRQLSYSASHDALTHLANRASFEKQLRILLQTVNSTHQRHALVFIDLDRFKAVNDSAGHAAGDALLRELASLMLSMLRSSDVLARLGGDEFGLLLPDCNVESARFIATRIISAVNDYHFIWEGRVHRVGASAGITLIDDNNHQAAEVMSQADIACYASKNGGRGRVTVYEPQQAAAHSERAAMSLDEQWRMIKENQLMMLAHGVASPRIPEARNLWLISLKLWSCEGEIIDEQTFRRSFSDPALSHALDRRVFHEFFQQAAKAVASKGISISLPLSVAGLSSATLVNDLLEQLENSPLPPRLLHLIIPAEAILDHAESVQKLRLAGCRIVLSQVGRDLQIFNSLKANMADYLLLDGELCANVQGNLMDEMLITIIQGHAQRLGMKTIAGPVVLPLVMDTLSGIGVDLIYGEVIADAQPLDLLVNSSYFAIN.

10 helical membrane passes run 9–29, 38–58, 64–84, 88–108, 127–147, 156–176, 190–207, 211–228, 236–256, and 270–290; these read LIALPHPLLHLVSLGLVSFIF, QFGTQLAPLWFPTSIMMVAFY, MWPGIALSCSLGNIAASILLF, SLNMTWTTINIVEAVVGAVLL, LALGSAIVPPLLGGVLVVLLT, FLIWVLSESIGALALVPLGLL, LLFESLLTLAITLTLSWL, YLPWPFTFIIVLLMWSAV, FLIFLTTVMMVSLMMAADPSL, and WLPFLLILLPANIMTMVMYAF. Positions 300-370 constitute a PAS 1 domain; the sequence is SETHFRNAME…QQVEKLISGE (71 aa). 2 consecutive PAC domains span residues 374-426 and 501-552; these read YSME…VNQQ and FKLE…ALFQ. The PAS 2 domain maps to 553–623; it reads EKERLHITLD…LMENIYSADT (71 aa). The region spanning 626–680 is the PAC 3 domain; the sequence is SAIEQDVVLHCRSGGSYDVHYSITPLSTLDGSNIGSVLVIQDVTESRKMLRQLSY. The 134-residue stretch at 712 to 845 folds into the GGDEF domain; that stretch reads QRHALVFIDL…GRGRVTVYEP (134 aa). Asp720 is a Mg(2+) binding site. Substrate-binding residues include Asn728, His733, and Asp737. Asp763 contacts Mg(2+). Asp763 acts as the Proton acceptor in catalysis. Arg783 contributes to the substrate binding site. In terms of domain architecture, EAL spans 855-1104; the sequence is AAMSLDEQWR…LLVNSSYFAI (250 aa).

As to quaternary structure, homodimer. It depends on Mg(2+) as a cofactor.

The protein localises to the cell inner membrane. The enzyme catalyses 2 GTP = 3',3'-c-di-GMP + 2 diphosphate. It participates in purine metabolism; 3',5'-cyclic di-GMP biosynthesis. Its function is as follows. Catalyzes the synthesis of cyclic-di-GMP (c-di-GMP) via the condensation of 2 GTP molecules. Involved in the control of the switch from cell motility to adhesion via regulation of cellular levels of c-di-GMP. Part of a signaling cascade that regulates curli biosynthesis. The cascade is composed of two c-di-GMP control modules, in which c-di-GMP controlled by the DgcE/PdeH pair (module I) regulates the activity of the DgcM/PdeR pair (module II), which in turn regulates activity of the transcription factor MlrA and expression of the master biofilm regulator csgD. This Escherichia coli (strain K12) protein is Probable diguanylate cyclase DgcE.